A 338-amino-acid chain; its full sequence is uncharacterized protein (338 aa).

The N-terminal stretch at 1–29 (MIKQLYKNITICSLAISTALTVFPATSYA) is a signal peptide.

It belongs to the aerolysin family.

This is an uncharacterized protein from Staphylococcus aureus (strain Mu50 / ATCC 700699).